The primary structure comprises 199 residues: Outer-membrane lipoprotein LolB (199 aa).

An N-terminal signal peptide occupies residues 1–28 (MSACPAPRSPVRWLHAFTLFLLLAVLAG). Cysteine 29 carries the N-palmitoyl cysteine lipid modification. Cysteine 29 is lipidated: S-diacylglycerol cysteine.

The protein belongs to the LolB family. In terms of assembly, monomer.

It localises to the cell outer membrane. Plays a critical role in the incorporation of lipoproteins in the outer membrane after they are released by the LolA protein. In Bordetella pertussis (strain Tohama I / ATCC BAA-589 / NCTC 13251), this protein is Outer-membrane lipoprotein LolB.